Here is a 149-residue protein sequence, read N- to C-terminus: Cytochrome c-type biogenesis protein CcmE (149 aa).

The Cytoplasmic segment spans residues 1–7 (MTRKQKR). Residues 8 to 28 (LAVIAGGVGFIMVAVLLVLFA) traverse the membrane as a helical; Signal-anchor for type II membrane protein segment. Residues 29–149 (FGQSIAYFYM…GVWKGEGEAK (121 aa)) are Periplasmic-facing. Heme contacts are provided by His-123 and Tyr-127.

This sequence belongs to the CcmE/CycJ family.

It is found in the cell inner membrane. In terms of biological role, heme chaperone required for the biogenesis of c-type cytochromes. Transiently binds heme delivered by CcmC and transfers the heme to apo-cytochromes in a process facilitated by CcmF and CcmH. This Allorhizobium ampelinum (strain ATCC BAA-846 / DSM 112012 / S4) (Agrobacterium vitis (strain S4)) protein is Cytochrome c-type biogenesis protein CcmE.